The primary structure comprises 652 residues: 2-oxoglutarate carboxylase large subunit (652 aa).

Positions 26–288 (ILITDLTPRD…DTGIDMKKLD (263 aa)) constitute a Pyruvate carboxyltransferase domain. Substrate-binding positions include 34–38 (RDGQQ) and arginine 105. Aspartate 35 contacts a divalent metal cation. Positions 196, 227, and 229 each coordinate a divalent metal cation. Lysine 196 is modified (N6-carboxylysine). Threonine 362 contacts substrate. One can recognise a Biotinyl-binding domain in the interval 563–643 (AEEKGIPKAT…TPDDALLRIK (81 aa)). N6-biotinyllysine is present on lysine 609.

In terms of assembly, heterohexadecamer of 8 large subunits and 8 small subunits. It depends on Mg(2+) as a cofactor. The cofactor is Mn(2+). Co(2+) is required as a cofactor. Biotinylated.

It catalyses the reaction hydrogencarbonate + 2-oxoglutarate + ATP = (S)-oxalosuccinate + ADP + phosphate + H(+). In Hydrogenobacter thermophilus (strain DSM 6534 / IAM 12695 / TK-6), this protein is 2-oxoglutarate carboxylase large subunit.